The primary structure comprises 154 residues: 17.6 kDa class I heat shock protein (154 aa).

The region spanning 40-154 (ETSAFANTRI…PDVKSIEISG (115 aa)) is the sHSP domain.

Belongs to the small heat shock protein (HSP20) family. In terms of assembly, forms oligomeric structures.

The protein localises to the cytoplasm. The chain is 17.6 kDa class I heat shock protein from Solanum peruvianum (Peruvian tomato).